Consider the following 792-residue polypeptide: Phenylalanine--tRNA ligase beta subunit (792 aa).

Positions 39–150 constitute a tRNA-binding domain; that stretch reads GDEITNVVTG…ENTPIGKDIK (112 aa). Residues 404-479 enclose the B5 domain; that stretch reads SEPNIVEVDY…RIYGYNKVPS (76 aa). Residues Asp457, Asp463, Glu466, and Glu467 each coordinate Mg(2+). One can recognise an FDX-ACB domain in the interval 699 to 792; the sequence is PKFPTVTRDI…LEHVLGAELR (94 aa).

Belongs to the phenylalanyl-tRNA synthetase beta subunit family. Type 1 subfamily. In terms of assembly, tetramer of two alpha and two beta subunits. Requires Mg(2+) as cofactor.

The protein localises to the cytoplasm. It carries out the reaction tRNA(Phe) + L-phenylalanine + ATP = L-phenylalanyl-tRNA(Phe) + AMP + diphosphate + H(+). The sequence is that of Phenylalanine--tRNA ligase beta subunit from Clostridium acetobutylicum (strain ATCC 824 / DSM 792 / JCM 1419 / IAM 19013 / LMG 5710 / NBRC 13948 / NRRL B-527 / VKM B-1787 / 2291 / W).